Here is a 50-residue protein sequence, read N- to C-terminus: Large ribosomal subunit protein bL33B (50 aa).

Belongs to the bacterial ribosomal protein bL33 family.

The chain is Large ribosomal subunit protein bL33B from Streptococcus pyogenes serotype M1.